Consider the following 298-residue polypeptide: Inosose dehydratase (298 aa).

Belongs to the IolE/MocC family. It depends on glutathione as a cofactor. The cofactor is Co(2+). Requires Mn(2+) as cofactor.

It catalyses the reaction scyllo-inosose = 3D-3,5/4-trihydroxycyclohexane-1,2-dione + H2O. Its pathway is polyol metabolism; myo-inositol degradation into acetyl-CoA; acetyl-CoA from myo-inositol: step 2/7. Catalyzes the dehydration of inosose (2-keto-myo-inositol, 2KMI or 2,4,6/3,5-pentahydroxycyclohexanone) to 3D-(3,5/4)-trihydroxycyclohexane-1,2-dione (D-2,3-diketo-4-deoxy-epi-inositol). The chain is Inosose dehydratase from Clostridium beijerinckii (strain ATCC 51743 / NCIMB 8052) (Clostridium acetobutylicum).